The following is a 284-amino-acid chain: Nucleotide-binding protein Sputw3181_3461 (284 aa).

Residue 8-15 participates in ATP binding; it reads GRSGSGKS. 56–59 is a binding site for GTP; the sequence is DVRN.

This sequence belongs to the RapZ-like family.

In terms of biological role, displays ATPase and GTPase activities. In Shewanella sp. (strain W3-18-1), this protein is Nucleotide-binding protein Sputw3181_3461.